Consider the following 1026-residue polypeptide: Multidrug resistance protein MdtC (1026 aa).

The next 11 membrane-spanning stretches (helical) occupy residues 15–35 (ILIA…LPVA), 333–353 (EVEE…FLFL), 360–380 (LIPA…MYLC), 387–407 (LSLM…IVVL), 431–451 (VGFT…PLLL), 463–483 (FAVT…TLTP), 528–548 (LVGV…IAIP), 853–873 (LILI…LYES), 897–917 (LFNA…IGIV), 953–973 (PIMM…LSDG), and 984–1004 (ITIV…TPVV).

Belongs to the resistance-nodulation-cell division (RND) (TC 2.A.6) family. MdtC subfamily. As to quaternary structure, part of a tripartite efflux system composed of MdtA, MdtB and MdtC. MdtC forms a heteromultimer with MdtB.

The protein localises to the cell inner membrane. The sequence is that of Multidrug resistance protein MdtC from Salmonella paratyphi B (strain ATCC BAA-1250 / SPB7).